The following is a 278-amino-acid chain: HTH-type transcriptional regulator ExsA (278 aa).

The HTH araC/xylS-type domain maps to 171 to 269 (ERLQLFMEKH…GCTPSRSRQG (99 aa)). DNA-binding regions (H-T-H motif) lie at residues 188–209 (SDFS…GSVY) and 236–259 (IVDI…RRRF).

Homodimer. Interacts with ExsD; this interaction inhibits ExsA activity.

In the absence of inducing signals such as low Ca(2+) or host cell contact, the T3SS/injectisome is expressed at a low basal level and exists in a quiescent state due to ExsA sequestration by ExsD in a 1:1 complex. Upon host cell contact, this interaction is disrupted by the anti-antiactivator protein ExsC leading to ExsA activation. Functionally, transcriptional regulator that plays an essential role in the activation the type III secretion system (T3SS) operons. In addition, ExsA directly regulates the transcription of ImpA virulence factor that cooperatively inhibits the functions of host macrophages together with the T3SS. The polypeptide is HTH-type transcriptional regulator ExsA (exsA) (Pseudomonas aeruginosa (strain ATCC 15692 / DSM 22644 / CIP 104116 / JCM 14847 / LMG 12228 / 1C / PRS 101 / PAO1)).